Consider the following 321-residue polypeptide: Large ribosomal subunit protein uL3 (321 aa).

It belongs to the universal ribosomal protein uL3 family. Part of the 50S ribosomal subunit. Forms a cluster with proteins L14 and L24e.

Functionally, one of the primary rRNA binding proteins, it binds directly near the 3'-end of the 23S rRNA, where it nucleates assembly of the 50S subunit. This Nanoarchaeum equitans (strain Kin4-M) protein is Large ribosomal subunit protein uL3.